The following is a 351-amino-acid chain: Protein EXPRESSION OF TERPENOIDS 1 (351 aa).

The disordered stretch occupies residues 1 to 23 (MANFFSLGGNQEQQHQEISSSQA). Positions 11 to 22 (QEQQHQEISSSQ) are enriched in low complexity. Cys-129, Cys-132, Cys-140, Cys-145, Cys-149, and Cys-156 together coordinate Zn(2+). The segment at residues 129–156 (CQDCGNQAKKDCQHMRCRTCCKSRGFQC) is a DNA-binding region (zn(2)-C6 fungal-type; degenerate). Residues 170 to 219 (RRERQQQLAALQQQQQGHNNNNNNHKNKRQREDPSASSLVSTRLPSNTNG) form a disordered region. A compositionally biased stretch (low complexity) spans 175–193 (QQLAALQQQQQGHNNNNNN). Residues 204–219 (SASSLVSTRLPSNTNG) show a composition bias toward polar residues. Positions 258 to 261 (IGGH) match the Required for homo- and heterodimerization motif. The tract at residues 286–320 (TSSGGSAGGVQHHHHNSAAVATATTTSGGDATAAG) is disordered. A compositionally biased stretch (low complexity) spans 303–320 (AAVATATTTSGGDATAAG).

Belongs to the SHI protein family. In terms of assembly, forms homodimers and heterodimers with LRP1.

It is found in the nucleus. In terms of biological role, transcription activator involved in the transcriptional regulation of terpene biosynthesis in glandular trichomes. Binds to the promoter of the linalool synthase TPS5 and promotes TPS5 gene transactivation. Acts synergistically with MYC1 in the transactivation of TPS5. This chain is Protein EXPRESSION OF TERPENOIDS 1, found in Solanum lycopersicum (Tomato).